The chain runs to 421 residues: Testin (421 aa).

The PET domain maps to 92–199; the sequence is MILTNPVAAK…GDVKLPCEMD (108 aa). The segment at 133 to 164 is disordered; it reads EKQPVAGSEGAQYRKKQLAKQLPAHDQDPSKC. Positions 155–164 are enriched in basic and acidic residues; it reads PAHDQDPSKC. LIM zinc-binding domains are found at residues 234–297, 299–359, and 362–421; these read YSCY…CDSE, PRCA…NHAV, and QGCH…KMMS.

It belongs to the prickle / espinas / testin family. Interacts via LIM domain 1 with ZYX. Interacts (via LIM domain 3) with ENAH and VASP. Interacts with ALKBH4, talin, actin, alpha-actinin, GRIP1 and PXN. Interacts (via LIM domain 2) with ACTL7A (via N-terminus). Heterodimer with ACTL7A; the heterodimer interacts with ENAH to form a heterotrimer.

Its subcellular location is the cytoplasm. The protein localises to the cell junction. It localises to the focal adhesion. Scaffold protein that may play a role in cell adhesion, cell spreading and in the reorganization of the actin cytoskeleton. Plays a role in the regulation of cell proliferation. May act as a tumor suppressor. The polypeptide is Testin (TES) (Papio anubis (Olive baboon)).